Reading from the N-terminus, the 327-residue chain is Eukaryotic translation initiation factor 3 subunit I (327 aa).

5 WD repeats span residues 8–47 (GHQR…RLGT), 50–89 (GHIG…ALGK), 147–186 (EQQS…ELNS), 189–228 (DHTA…CLKT), and 286–327 (GHFG…HTFE).

Belongs to the eIF-3 subunit I family. As to quaternary structure, component of the eukaryotic translation initiation factor 3 (eIF-3) complex.

The protein localises to the cytoplasm. Component of the eukaryotic translation initiation factor 3 (eIF-3) complex, which is involved in protein synthesis of a specialized repertoire of mRNAs and, together with other initiation factors, stimulates binding of mRNA and methionyl-tRNAi to the 40S ribosome. The eIF-3 complex specifically targets and initiates translation of a subset of mRNAs involved in cell proliferation. The sequence is that of Eukaryotic translation initiation factor 3 subunit I from Anopheles gambiae (African malaria mosquito).